The following is a 491-amino-acid chain: Serralysin (491 aa).

Positions 1–16 are excised as a propeptide; it reads MGSFLLKKAVGLSNIS. His186 contributes to the Zn(2+) binding site. Glu187 is an active-site residue. The Zn(2+) site is built by His190, His196, and Tyr226. 27 residues coordinate Ca(2+): Arg263, Gly265, Asp295, Gly297, Gly298, Asp300, Thr337, Glu339, Gly344, Gly346, Asp348, Asn353, Ala355, Asn357, Gly361, Gly362, Gly364, Asp366, Gly370, Gly373, Asp384, Gly388, Gly389, Gly391, Asp402, Asp409, and Asp419. 3 Hemolysin-type calcium-binding repeats span residues 342–359, 360–377, and 378–395; these read IGGF…DNTL, IGGE…NNTI, and YGGR…SNTF.

It belongs to the peptidase M10B family. Ca(2+) serves as cofactor. It depends on Zn(2+) as a cofactor.

Its subcellular location is the secreted. It catalyses the reaction Preferential cleavage of bonds with hydrophobic residues in P1'.. Ca(2+) increases protease activity. One of the virulence factors produced during swarmer cell differentiation of the bacteria, which seems to be associated with pathogenesis. The protease activity is limited to IgA1, IgA2, as well as IgG degradation. This Proteus mirabilis protein is Serralysin (zapA).